The sequence spans 368 residues: Abasic site processing protein YMR114C (368 aa).

The Nucleophile role is filled by Cys2. A Thiazolidine linkage to a ring-opened DNA abasic site modification is found at Cys2. Residues 25 to 48 (VNTPKDASSNSQHPHDEEDTKDQP) are disordered. The span at 37–46 (HPHDEEDTKD) shows a compositional bias: basic and acidic residues. Residue Glu132 is part of the active site. Residues 270-368 (LENDNEQGID…DSRGKKKIKK (99 aa)) form a disordered region. Basic and acidic residues-rich tracts occupy residues 281-296 (RGVK…DVFN), 304-313 (NSYDGLKKNE), and 326-349 (IGDR…EKRN). Phosphoserine is present on Ser338.

Belongs to the SOS response-associated peptidase family.

It localises to the chromosome. With respect to regulation, formation and reversal of DNA-protein cross-link depends on DNA context. Catalyzes formation of the thiazolidine linkage in presence of abasic sites in single-stranded DNA. Mediates the reversal of the thiazolidine cross-link in presence of double stranded DNA. In terms of biological role, sensor of abasic sites in single-stranded DNA (ssDNA) required to preserve genome integrity by promoting error-free repair of abasic sites. Recognizes and binds abasic sites in ssDNA at replication forks and chemically modifies the lesion by forming a covalent cross-link with DNA: forms a stable thiazolidine linkage between a ring-opened abasic site and the alpha-amino and sulfhydryl substituents of its N-terminal catalytic cysteine residue. The DNA-protein cross-link is then reversed: able to catalyze the reversal of the thiazolidine cross-link and cycle between a cross-link and a non-cross-linked state depending on DNA context: mediates self-reversal of the thiazolidine cross-link in double stranded DNA. Acts as a protease: mediates autocatalytic processing of its N-terminal methionine in order to expose the catalytic cysteine. The chain is Abasic site processing protein YMR114C from Saccharomyces cerevisiae (strain ATCC 204508 / S288c) (Baker's yeast).